The sequence spans 200 residues: Imidazole glycerol phosphate synthase subunit HisH (200 aa).

The region spanning 2–200 (KVAIVEYGVG…LGEVLTGASR (199 aa)) is the Glutamine amidotransferase type-1 domain. Catalysis depends on C79, which acts as the Nucleophile. Residues H179 and E181 contribute to the active site.

In terms of assembly, heterodimer of HisH and HisF.

It localises to the cytoplasm. It carries out the reaction 5-[(5-phospho-1-deoxy-D-ribulos-1-ylimino)methylamino]-1-(5-phospho-beta-D-ribosyl)imidazole-4-carboxamide + L-glutamine = D-erythro-1-(imidazol-4-yl)glycerol 3-phosphate + 5-amino-1-(5-phospho-beta-D-ribosyl)imidazole-4-carboxamide + L-glutamate + H(+). The catalysed reaction is L-glutamine + H2O = L-glutamate + NH4(+). Its pathway is amino-acid biosynthesis; L-histidine biosynthesis; L-histidine from 5-phospho-alpha-D-ribose 1-diphosphate: step 5/9. Its function is as follows. IGPS catalyzes the conversion of PRFAR and glutamine to IGP, AICAR and glutamate. The HisH subunit catalyzes the hydrolysis of glutamine to glutamate and ammonia as part of the synthesis of IGP and AICAR. The resulting ammonia molecule is channeled to the active site of HisF. In Methanopyrus kandleri (strain AV19 / DSM 6324 / JCM 9639 / NBRC 100938), this protein is Imidazole glycerol phosphate synthase subunit HisH.